The sequence spans 552 residues: Membrane protein insertase YidC (552 aa).

A helical membrane pass occupies residues 6–26 (NLLLAAIAAVILMLFIRWNHF). 2 stretches are compositionally biased toward polar residues: residues 32 to 41 (QHQAGNTPAG) and 60 to 70 (PTASDTPQATA). The tract at residues 32-70 (QHQAGNTPAGSSIAAIAPDSNGDIPSAVPTASDTPQATA) is disordered. A run of 4 helical transmembrane segments spans residues 365–387 (WGLA…SAAS), 431–451 (FGGC…YWVL), 472–492 (MDPY…MQKL), and 508–528 (LPFV…LYWV).

This sequence belongs to the OXA1/ALB3/YidC family. Type 1 subfamily. Interacts with the Sec translocase complex via SecD. Specifically interacts with transmembrane segments of nascent integral membrane proteins during membrane integration.

It localises to the cell inner membrane. In terms of biological role, required for the insertion and/or proper folding and/or complex formation of integral membrane proteins into the membrane. Involved in integration of membrane proteins that insert both dependently and independently of the Sec translocase complex, as well as at least some lipoproteins. Aids folding of multispanning membrane proteins. The chain is Membrane protein insertase YidC from Cellvibrio japonicus (strain Ueda107) (Pseudomonas fluorescens subsp. cellulosa).